A 342-amino-acid chain; its full sequence is Autoinducer 2 import system permease protein LsrC (342 aa).

Residues 1–13 (MLKFIQNNREITA) are Periplasmic-facing. Residues 14–34 (LLAVVLLFVLPGFLDRQYLSV) traverse the membrane as a helical segment. Over 35 to 38 (QTLT) the chain is Cytoplasmic. Residues 39–59 (MVYSSAQILILLAMGATLVML) traverse the membrane as a helical segment. At 60–69 (TRNIDVSVGS) the chain is on the periplasmic side. The chain crosses the membrane as a helical span at residues 70-90 (ITGMCAVLLGMLLNAGYSLPV). Topologically, residues 91–92 (AC) are cytoplasmic. The chain crosses the membrane as a helical span at residues 93–113 (VATLLLGLLAGFFNGALVAWL). Residue lysine 114 is a topological domain, periplasmic. The chain crosses the membrane as a helical span at residues 115–135 (IPAIVATLGTLGLYRGIMLLW). Residues 136-154 (TGGKWIEGLPAELKQLSAP) are Cytoplasmic-facing. Residues 155–175 (LLLGISAIGWLTIILVAFMAW) form a helical membrane-spanning segment. At 176 to 212 (LLAKTAFGRSFYATGDNLQGARQLGVRTEAIRIVAFS) the chain is on the periplasmic side. A helical transmembrane segment spans residues 213–233 (LNGCMAALAGIVFASQIGFIL). The Cytoplasmic segment spans residues 234–251 (NQTGTGLEMKAIAACVLG). Residues 252–272 (GISLLGGSGAIIGAVLGAWFL) form a helical membrane-spanning segment. The Periplasmic portion of the chain corresponds to 273–283 (TQIDSVLVLLR). The helical transmembrane segment at 284–304 (IPAWWNDFIAGLVLLAVLVFD) threads the bilayer. Residues 305–342 (GRLRCALERNLRRQKYARFMTPPPSVKPASSGKKREAA) are Cytoplasmic-facing.

Belongs to the binding-protein-dependent transport system permease family. AraH/RbsC subfamily. The complex is composed of two ATP-binding proteins (LsrA), two transmembrane proteins (LsrC and LsrD) and a solute-binding protein (LsrB).

The protein resides in the cell inner membrane. Its function is as follows. Part of the ABC transporter complex LsrABCD involved in autoinducer 2 (AI-2) import. Probably responsible for the translocation of the substrate across the membrane. The chain is Autoinducer 2 import system permease protein LsrC (lsrC) from Shigella flexneri.